We begin with the raw amino-acid sequence, 86 residues long: Collagen alpha-1(XII) chain (86 aa).

Positions 1 to 12 (NQPGPPGPPGPP) are enriched in pro residues. The interval 1–86 (NQPGPPGPPG…PGRPGDSGIR (86 aa)) is disordered. A hydroxyproline mark is found at Pro6, Pro9, Pro12, Pro18, Pro24, Pro27, Pro30, Pro42, Pro51, Pro54, Pro65, Pro74, Pro77, and Pro80. Over residues 16-25 (GEPGPGGRPG) the composition is skewed to gly residues. Positions 35 to 50 (PQGERGLPGEXGERGL) are enriched in low complexity. The span at 57-71 (QGESRTGPPGSTGSR) shows a compositional bias: low complexity.

This sequence belongs to the fibril-associated collagens with interrupted helices (FACIT) family. As to quaternary structure, trimer of identical chains each containing 190 kDa of non-triple-helical sequences. In terms of processing, the triple-helical tail is stabilized by disulfide bonds at each end. Prolines at the third position of the tripeptide repeating unit (G-X-Y) are hydroxylated in some or all of the chains.

The protein resides in the secreted. It is found in the extracellular space. It localises to the extracellular matrix. In terms of biological role, type XII collagen interacts with type I collagen-containing fibrils, the COL1 domain could be associated with the surface of the fibrils, and the COL2 and NC3 domains may be localized in the perifibrillar matrix. The sequence is that of Collagen alpha-1(XII) chain (COL12A1) from Bos taurus (Bovine).